A 272-amino-acid chain; its full sequence is Phosphatidylglycerol--prolipoprotein diacylglyceryl transferase (272 aa).

A run of 7 helical transmembrane segments spans residues 17-37, 55-75, 90-110, 125-145, 174-194, 202-222, and 230-250; these read LQVH…WGLA, LVFY…VLFY, VWTG…AMLF, FIAP…FIGG, PSQI…LWWF, MAVS…MEFF, and GFIL…MLLI. Arginine 138 serves as a coordination point for a 1,2-diacyl-sn-glycero-3-phospho-(1'-sn-glycerol).

The protein belongs to the Lgt family.

The protein localises to the cell inner membrane. The catalysed reaction is L-cysteinyl-[prolipoprotein] + a 1,2-diacyl-sn-glycero-3-phospho-(1'-sn-glycerol) = an S-1,2-diacyl-sn-glyceryl-L-cysteinyl-[prolipoprotein] + sn-glycerol 1-phosphate + H(+). It functions in the pathway protein modification; lipoprotein biosynthesis (diacylglyceryl transfer). Its function is as follows. Catalyzes the transfer of the diacylglyceryl group from phosphatidylglycerol to the sulfhydryl group of the N-terminal cysteine of a prolipoprotein, the first step in the formation of mature lipoproteins. This Acinetobacter baumannii (strain SDF) protein is Phosphatidylglycerol--prolipoprotein diacylglyceryl transferase.